A 302-amino-acid chain; its full sequence is Protein NEOXANTHIN-DEFICIENT 1 (302 aa).

Its function is as follows. Required for neoxanthin biosynthesis. Probably not involved directly in the enzymatic conversion of violaxanthin to neoxanthin. Is necessary but not sufficient for neoxanthin synthesis. In Oryza sativa subsp. japonica (Rice), this protein is Protein NEOXANTHIN-DEFICIENT 1.